A 452-amino-acid polypeptide reads, in one-letter code: UPF0210 protein PTH_0987 (452 aa).

It belongs to the UPF0210 family. Homodimer.

The sequence is that of UPF0210 protein PTH_0987 from Pelotomaculum thermopropionicum (strain DSM 13744 / JCM 10971 / SI).